Reading from the N-terminus, the 271-residue chain is Tryptophan synthase alpha chain (271 aa).

Active-site proton acceptor residues include Glu-49 and Asp-60.

It belongs to the TrpA family. In terms of assembly, tetramer of two alpha and two beta chains.

It carries out the reaction (1S,2R)-1-C-(indol-3-yl)glycerol 3-phosphate + L-serine = D-glyceraldehyde 3-phosphate + L-tryptophan + H2O. It functions in the pathway amino-acid biosynthesis; L-tryptophan biosynthesis; L-tryptophan from chorismate: step 5/5. Its function is as follows. The alpha subunit is responsible for the aldol cleavage of indoleglycerol phosphate to indole and glyceraldehyde 3-phosphate. The sequence is that of Tryptophan synthase alpha chain from Burkholderia cenocepacia (strain ATCC BAA-245 / DSM 16553 / LMG 16656 / NCTC 13227 / J2315 / CF5610) (Burkholderia cepacia (strain J2315)).